The following is a 118-amino-acid chain: UPF0342 protein BCE_0953 (118 aa).

Belongs to the UPF0342 family.

The sequence is that of UPF0342 protein BCE_0953 from Bacillus cereus (strain ATCC 10987 / NRS 248).